The sequence spans 253 residues: Imidazole glycerol phosphate synthase subunit HisF (253 aa).

Catalysis depends on residues Asp-11 and Asp-130.

This sequence belongs to the HisA/HisF family. In terms of assembly, heterodimer of HisH and HisF.

The protein localises to the cytoplasm. It catalyses the reaction 5-[(5-phospho-1-deoxy-D-ribulos-1-ylimino)methylamino]-1-(5-phospho-beta-D-ribosyl)imidazole-4-carboxamide + L-glutamine = D-erythro-1-(imidazol-4-yl)glycerol 3-phosphate + 5-amino-1-(5-phospho-beta-D-ribosyl)imidazole-4-carboxamide + L-glutamate + H(+). The protein operates within amino-acid biosynthesis; L-histidine biosynthesis; L-histidine from 5-phospho-alpha-D-ribose 1-diphosphate: step 5/9. In terms of biological role, IGPS catalyzes the conversion of PRFAR and glutamine to IGP, AICAR and glutamate. The HisF subunit catalyzes the cyclization activity that produces IGP and AICAR from PRFAR using the ammonia provided by the HisH subunit. The polypeptide is Imidazole glycerol phosphate synthase subunit HisF (Dehalococcoides mccartyi (strain CBDB1)).